Here is a 106-residue protein sequence, read N- to C-terminus: Ig kappa chain C region, A allele (106 aa).

In terms of domain architecture, Ig-like spans 5 to 102; that stretch reads PTVSIFPPSM…SSSPVVKSFN (98 aa). Cysteines 26 and 86 form a disulfide.

This chain is Ig kappa chain C region, A allele, found in Rattus norvegicus (Rat).